Here is a 98-residue protein sequence, read N- to C-terminus: NADH-ubiquinone oxidoreductase chain 4L (98 aa).

A run of 3 helical transmembrane segments spans residues 1-21 (MPII…GMLF), 29-49 (SLLC…LMAL), and 58-78 (IVPI…LALL).

Belongs to the complex I subunit 4L family. As to quaternary structure, core subunit of respiratory chain NADH dehydrogenase (Complex I) which is composed of 45 different subunits.

Its subcellular location is the mitochondrion inner membrane. The enzyme catalyses a ubiquinone + NADH + 5 H(+)(in) = a ubiquinol + NAD(+) + 4 H(+)(out). In terms of biological role, core subunit of the mitochondrial membrane respiratory chain NADH dehydrogenase (Complex I) which catalyzes electron transfer from NADH through the respiratory chain, using ubiquinone as an electron acceptor. Part of the enzyme membrane arm which is embedded in the lipid bilayer and involved in proton translocation. This Trachypithecus obscurus (Dusky leaf-monkey) protein is NADH-ubiquinone oxidoreductase chain 4L (MT-ND4L).